The following is a 262-amino-acid chain: Imidazole glycerol phosphate synthase subunit HisF (262 aa).

Active-site residues include Asp11 and Asp130.

Belongs to the HisA/HisF family. In terms of assembly, heterodimer of HisH and HisF.

The protein resides in the cytoplasm. The catalysed reaction is 5-[(5-phospho-1-deoxy-D-ribulos-1-ylimino)methylamino]-1-(5-phospho-beta-D-ribosyl)imidazole-4-carboxamide + L-glutamine = D-erythro-1-(imidazol-4-yl)glycerol 3-phosphate + 5-amino-1-(5-phospho-beta-D-ribosyl)imidazole-4-carboxamide + L-glutamate + H(+). It functions in the pathway amino-acid biosynthesis; L-histidine biosynthesis; L-histidine from 5-phospho-alpha-D-ribose 1-diphosphate: step 5/9. In terms of biological role, IGPS catalyzes the conversion of PRFAR and glutamine to IGP, AICAR and glutamate. The HisF subunit catalyzes the cyclization activity that produces IGP and AICAR from PRFAR using the ammonia provided by the HisH subunit. In Rhodopirellula baltica (strain DSM 10527 / NCIMB 13988 / SH1), this protein is Imidazole glycerol phosphate synthase subunit HisF.